A 209-amino-acid polypeptide reads, in one-letter code: Ephrin-A2 (209 aa).

The N-terminal stretch at 1–20 (MAPAQRPLLPLLLLLLPLRA) is a signal peptide. Residues 30-170 (ADRYAVYWNR…RLKVYVRPTN (141 aa)) enclose the Ephrin RBD domain. Asn38 carries N-linked (GlcNAc...) asparagine glycosylation. 2 cysteine pairs are disulfide-bonded: Cys69–Cys110 and Cys98–Cys159. Residues Asn170 and Asn184 are each glycosylated (N-linked (GlcNAc...) asparagine). Asn184 carries the GPI-anchor amidated asparagine lipid modification. A propeptide spans 185 to 209 (SSCSGLGGCHLFLTTVPVLWSLLGS) (removed in mature form).

The protein belongs to the ephrin family. In terms of assembly, binds to the receptor tyrosine kinases EPHA3, EPHA4 and EPHA5. Interacts with EPHA8; activates EPHA8. As to expression, expressed in myogenic progenitor cells.

Its subcellular location is the cell membrane. Its function is as follows. Cell surface GPI-bound ligand for Eph receptors, a family of receptor tyrosine kinases which are crucial for migration, repulsion and adhesion during neuronal, vascular and epithelial development. Binds promiscuously Eph receptors residing on adjacent cells, leading to contact-dependent bidirectional signaling into neighboring cells. The signaling pathway downstream of the receptor is referred to as forward signaling while the signaling pathway downstream of the ephrin ligand is referred to as reverse signaling. With the EPHA2 receptor may play a role in bone remodeling through regulation of osteoclastogenesis and osteoblastogenesis. The sequence is that of Ephrin-A2 (Efna2) from Mus musculus (Mouse).